A 156-amino-acid polypeptide reads, in one-letter code: Small ribosomal subunit protein uS7 (156 aa).

It belongs to the universal ribosomal protein uS7 family. In terms of assembly, part of the 30S ribosomal subunit. Contacts proteins S9 and S11.

Functionally, one of the primary rRNA binding proteins, it binds directly to 16S rRNA where it nucleates assembly of the head domain of the 30S subunit. Is located at the subunit interface close to the decoding center, probably blocks exit of the E-site tRNA. The sequence is that of Small ribosomal subunit protein uS7 from Bacillus mycoides (strain KBAB4) (Bacillus weihenstephanensis).